We begin with the raw amino-acid sequence, 326 residues long: Glycerol-3-phosphate dehydrogenase [NAD(P)+] (326 aa).

The NADPH site is built by Trp-15, Arg-35, and Lys-107. Sn-glycerol 3-phosphate-binding residues include Lys-107, Gly-135, and Ser-137. Ala-139 lines the NADPH pocket. The sn-glycerol 3-phosphate site is built by Lys-190, Asp-243, Ser-253, Arg-254, and Asn-255. Residue Lys-190 is the Proton acceptor of the active site. Position 254 (Arg-254) interacts with NADPH. NADPH-binding residues include Leu-273 and Glu-275.

Belongs to the NAD-dependent glycerol-3-phosphate dehydrogenase family.

The protein resides in the cytoplasm. It carries out the reaction sn-glycerol 3-phosphate + NAD(+) = dihydroxyacetone phosphate + NADH + H(+). It catalyses the reaction sn-glycerol 3-phosphate + NADP(+) = dihydroxyacetone phosphate + NADPH + H(+). It participates in membrane lipid metabolism; glycerophospholipid metabolism. Its function is as follows. Catalyzes the reduction of the glycolytic intermediate dihydroxyacetone phosphate (DHAP) to sn-glycerol 3-phosphate (G3P), the key precursor for phospholipid synthesis. In Bradyrhizobium diazoefficiens (strain JCM 10833 / BCRC 13528 / IAM 13628 / NBRC 14792 / USDA 110), this protein is Glycerol-3-phosphate dehydrogenase [NAD(P)+].